A 584-amino-acid chain; its full sequence is Transcription factor COE1 (584 aa).

At M1 the chain carries N-acetylmethionine. Positions 1 to 14 (MFGIQESIQRSGSS) are enriched in polar residues. A disordered region spans residues 1-21 (MFGIQESIQRSGSSMKEEPLG). K16 is covalently cross-linked (Glycyl lysine isopeptide (Lys-Gly) (interchain with G-Cter in SUMO1); alternate). K16 is covalently cross-linked (Glycyl lysine isopeptide (Lys-Gly) (interchain with G-Cter in SUMO2); alternate). The segment at 63 to 66 (RKSN) is interaction with DNA. The C5-type zinc-finger motif lies at 151–170 (CRVLLTHEIMCSRCCDKKSC). Interaction with DNA regions lie at residues 197-204 (NCLKNAGN) and 236-239 (NNSK). The IPT/TIG domain occupies 255–338 (PCIKAISPSE…KGTPGRFIYT (84 aa)). Residues 450–473 (GFTRNSSSVSPHGYVPSTTPQQTN) are disordered.

The protein belongs to the COE family. Homodimer. Interacts with ZNF423 and ZNF521, leading to prevent EBF1 to bind DNA and activate target genes. Interacts with CCR4-NOT component CNOT3. In terms of tissue distribution, expressed exclusively in olfactory receptor neurons and their precursors.

It is found in the nucleus. Its function is as follows. Key pioneer transcription factor of B-cell specification and commitment. Recognizes variations of the palindromic sequence 5'-ATTCCCNNGGGAATT-3'. Operates in a transcription factor network to activate B-cell-specific genes and repress genes associated with alternative cell fates. For instance, positively regulates many B-cell specific genes including BCR or CD40 while repressing genes that direct cells into alternative lineages, including GATA3 and TCF7 for the T-cell lineage. In addition to its role during lymphopoiesis, controls the thermogenic gene program in adipocytes during development and in response to environmental cold. The protein is Transcription factor COE1 (Ebf1) of Rattus norvegicus (Rat).